The primary structure comprises 55 residues: ATP synthase F(0) complex subunit 8 (55 aa).

A helical transmembrane segment spans residues 7–24; that stretch reads NPWFFIMLLSWLTFSLII. Residues 35–55 are disordered; the sequence is NPPSNKTTTHTKTTPWTWPWT. Over residues 37 to 55 the composition is skewed to low complexity; the sequence is PSNKTTTHTKTTPWTWPWT.

This sequence belongs to the ATPase protein 8 family. In terms of assembly, component of the ATP synthase complex composed at least of ATP5F1A/subunit alpha, ATP5F1B/subunit beta, ATP5MC1/subunit c (homooctomer), MT-ATP6/subunit a, MT-ATP8/subunit 8, ATP5ME/subunit e, ATP5MF/subunit f, ATP5MG/subunit g, ATP5MK/subunit k, ATP5MJ/subunit j, ATP5F1C/subunit gamma, ATP5F1D/subunit delta, ATP5F1E/subunit epsilon, ATP5PF/subunit F6, ATP5PB/subunit b, ATP5PD/subunit d, ATP5PO/subunit OSCP. ATP synthase complex consists of a soluble F(1) head domain (subunits alpha(3) and beta(3)) - the catalytic core - and a membrane F(0) domain - the membrane proton channel (subunits c, a, 8, e, f, g, k and j). These two domains are linked by a central stalk (subunits gamma, delta, and epsilon) rotating inside the F1 region and a stationary peripheral stalk (subunits F6, b, d, and OSCP).

It is found in the mitochondrion membrane. Subunit 8, of the mitochondrial membrane ATP synthase complex (F(1)F(0) ATP synthase or Complex V) that produces ATP from ADP in the presence of a proton gradient across the membrane which is generated by electron transport complexes of the respiratory chain. ATP synthase complex consist of a soluble F(1) head domain - the catalytic core - and a membrane F(1) domain - the membrane proton channel. These two domains are linked by a central stalk rotating inside the F(1) region and a stationary peripheral stalk. During catalysis, ATP synthesis in the catalytic domain of F(1) is coupled via a rotary mechanism of the central stalk subunits to proton translocation. In vivo, can only synthesize ATP although its ATP hydrolase activity can be activated artificially in vitro. Part of the complex F(0) domain. The chain is ATP synthase F(0) complex subunit 8 from Chaetura pelagica (Chimney swift).